We begin with the raw amino-acid sequence, 246 residues long: UDP-N-acetyl-D-mannosaminuronic acid transferase (246 aa).

The protein belongs to the glycosyltransferase 26 family.

The enzyme catalyses UDP-N-acetyl-alpha-D-mannosaminouronate + N-acetyl-alpha-D-glucosaminyl-di-trans,octa-cis-undecaprenyl diphosphate = beta-D-ManNAcA-(1-&gt;4)-alpha-D-GlcNAc-di-trans,octa-cis-undecaprenyl diphosphate + UDP + H(+). It functions in the pathway bacterial outer membrane biogenesis; enterobacterial common antigen biosynthesis. Catalyzes the synthesis of Und-PP-GlcNAc-ManNAcA (Lipid II), the second lipid-linked intermediate involved in enterobacterial common antigen (ECA) synthesis. This chain is UDP-N-acetyl-D-mannosaminuronic acid transferase, found in Escherichia coli (strain 55989 / EAEC).